A 1934-amino-acid polypeptide reads, in one-letter code: MGEKEIVDGCVAACHIAYACSEVAFTYPITPSSTISEVADSWMSRGRRNIFDQVVSVVEMQSEMGSAGALHGSLSVGCSTTTFTASQGLLLMIPNMYKIAGELWPCVFHVTARAIATSSLSIFGDHNDIMAARQTGWAFLGAMTVQEVMDLALVSHVSTFECSVPFVNFFDGFRTSHELQKIDMISYETIKKIFPYEKLKEFRERALNPTHPTLRGTATSSDVYFQLAEARNKYYESTPDIVQSVMDRLAKLIGRSYHLFDYYGHPDAEFLIVVMGSGGLTIEEMIDYLMEKSNEKVGMIKVRLFRPWSIDAFVKKIPKTTKRITVLERCKESGSLGEPLCLDVSTSIMRSELSSNNILVLGGRYGLASKEFTPGMALAVWENMISENPINNFSVGIDDDVTFKSLFVRQPRLDLLTSETKQCLFWGLGSDGTVSANKNAIKIIGESTDLQVQGYFAYDAKKAGGATMSHLRFGPKPIKSAYLLQRCDYVAVHHPSYVHKFDVLENIKQGGCFVLNCPWSTLEELNHELPSKIKHQIASRDVKFYVIDAQRIAQESNLGRRINNILMVVFFSLTNIIPLDLAIKLVKEAIKKTYGKKGDAVVNSNWKAVDLTLESLIQISYDKSQWISKDKCGEKSLPATAVETGNKDQEITKSTVLKQKPEHDVNQFVKDILGPVNALKGDELPVSMFEPTGTVPLGTTAYEKRGIAMSIPIVDMNKCTQCNYCSIVCPHAAIRPFLLDEAEFKNAPETMHIPKAKGGQEFSSYYYRIQVTPLDCTGCELCVHACPDDALHMEGLQKMEAVEKTHWDYLIGLPNKAEKFDRTTVKGSQFQQPLLEFSAACEGCGETPYVKLLTQLFGERMVIANATGCSSIWGASYPSVPYTKNQKGYGPAWGNSLFEDNAEYGLGMVVGYRQRRDRFRELVSNEILKDITEEEEFLKDDNASVQGRNEIITKYDHLKDYLRSWLKNIRNGEACQSLFEEISKLLEDNLINSNNFAQVLKKDRIELLEKLYDSRDLIPKISHWIVGGDGWAYDIGYAGLDHVLSFGEDVNIIILDTEVYSNTGGQASKSTPFGAIAKFAQSGNLRQKKDIGSIAMEYGSVYVASVALGANYSQTIKSLLEAEKYPGTSLIVAYSTCIEHGYTKYNLQQESVKLAVESGYWPLYRYNPELVRTEVVDNLTTIVSSGFTLDSKKVKVDIENFLKRENRFLQLIRSNPELASMAKDKLKAHSDKRFQKMKDMSENVTVTALKDQIKKLKDQLISIQNASKTGELAASGLINADLFIEQEMHVLYGTETGNSEEVAQYIQSQLVSRGYSSSSLNLDDLDIDEFLNPDKFSTVIIVTSTSGQGEFPGSSGILYEALLKKHLENQDDKFCSFMRFGIFGLGDSNYVFFNEAAKKWDKLLLDCGAVRIGAVGMGDDQSEEKYETELIEWLPDYLQLINAPEPKHDEKSEIPKATTFKVTILDSCRNDILNESTGTLCEKLDENNNIGNSHYKPIIPPNSVLLPVIENKRITNQDYDKDVRHIVFKLIGDGGDTPSLSYCLGDSLALYGQNPVNEAIKAIEMFGYNPYSLLRLSINEENEANNTNKVNQRYSSLFGYDITVLQLFVECLDLWGKPNRKFFQEFYRYCSNPEEKIQAKKWAQNEGKKLIEEFSSKTGTYLDVFKMFESARPTLAQLLDIVPFIKSRSYSIASCNKFVNGEKIELCVGIVDWKLESGEIRYGQCTGFLNRLPILDSESKIDSIPRLPSNIKASAFNLPFDYRSPVIMACMGTGIAPFRAFVQNKKYIRDVLKEEIGPVILYFGCRYYDNDYLYREELENYVKEGVITSLNIAFSRDPKGYKTSNCENIRYAQKMYVQHLMLENSQEIYENMIEKCGYFYLCGTKQVPIDIRKAIIQIIIKHSSTTEQVTSEEDANSILNSIQIMGRYNVEAWS.

4Fe-4S ferredoxin-type domains follow at residues 710 to 739 (SIPI…PFLL) and 767 to 796 (YRIQ…MEGL). [4Fe-4S] cluster contacts are provided by cysteine 719, cysteine 722, cysteine 725, cysteine 729, cysteine 776, cysteine 779, cysteine 782, and cysteine 786. Positions 1288-1438 (MHVLYGTETG…ELIEWLPDYL (151 aa)) constitute a Flavodoxin-like domain. Positions 1501-1759 (PNSVLLPVIE…NIKASAFNLP (259 aa)) constitute an FAD-binding FR-type domain. FAD contacts are provided by residues 1542-1553 (YCLGDSLALYGQ) and 1685-1695 (IKSRSYSIASC).

It in the N-terminal section; belongs to the pyruvate:ferredoxin/flavodoxin oxidoreductase family. Homodimer. The cofactor is FAD. It depends on FMN as a cofactor. Thiamine diphosphate is required as a cofactor.

The enzyme catalyses pyruvate + NADP(+) + CoA = acetyl-CoA + CO2 + NADPH. Functionally, may have an important role in respiratory metabolism. Cryptosporidium have a relic mitochondrion with no function in energy metabolism so it is not known if PFOR has a function. The polypeptide is Pyruvate dehydrogenase [NADP(+)] (PFOR) (Cryptosporidium parvum).